A 484-amino-acid polypeptide reads, in one-letter code: Tribbles (484 aa).

Over residues 1–23 (MDNSSGQNSRTASSASTSKIVNY) the composition is skewed to polar residues. Positions 1 to 51 (MDNSSGQNSRTASSASTSKIVNYSSPVSPGVAAATSSSSSSSSSGMSSSQE) are disordered. Low complexity predominate over residues 24-49 (SSPVSPGVAAATSSSSSSSSSGMSSS). Residues 129–397 (YRHLVDLTAS…ASHIFLTPWL (269 aa)) form the Protein kinase domain. Composition is skewed to acidic residues over residues 420–437 (AEED…DEEG) and 475–484 (PEPDTDVDMG). Disordered stretches follow at residues 420–443 (AEED…PLGD) and 464–484 (MAQN…VDMG).

Belongs to the protein kinase superfamily. CAMK Ser/Thr protein kinase family. Tribbles subfamily. In terms of assembly, interacts with slbo. Interacts with Akt1. Expressed throughout the brain with highest levels of expression detected in the cell body rind and lower levels of expression detected in the neurophil (at protein level).

The protein resides in the nucleus. It localises to the cytoplasm. Its subcellular location is the cell cortex. Functionally, adapter protein that negatively regulates different signaling pathways to coordinate cell differentiation, proliferation, migration and growth. Functions by binding to key regulatory proteins and either blocks their activity or regulates their turnover by the proteasome. In various developing tissues functions as a cell cycle regulator that mediates cell proliferation according to the requirements of the developmental program. Acts by inducing the proteasomal degradation of the CD25 mitotic activators stg and twe at critical stages of development to delay entry into mitosis and thus mediate cell proliferation. During gastrulation, negatively regulates stg to delay mitosis in the ventral region of the embryonic mesoderm thus allowing invagination to be completed before cell division takes place. Delaying stg-dependent mitosis during bristle development and in migrating germline pole cells also arrests their cell divisions, whereas in cystocytes it promotes their cell divisions. Involved in the regulation of the mid-blastula transition; promotes the destruction of twe resulting in the cell cycle arrest in G2 of cycle 14 which delays mitosis and thus reduces cell proliferation allowing cell fate specification and morphogenesis to take place. In germline cells, blocks border cell migration during oogenesis by binding to slbo/C/EBP and promoting its ubiquitination and degradation by the proteasome. May function in a negative feedback loop with slbo to coordinate proper border cell migration. During tissue growth negatively regulates insulin signaling by binding to Akt1 and blocking its phosphorylation-dependent activation. However it may also function downstream in the insulin signaling pathway, acting with Akt1 to direct foxo degradation. Essential for the proper formation of operant place and aversive olfactory memories. This is Tribbles from Drosophila melanogaster (Fruit fly).